Reading from the N-terminus, the 372-residue chain is Pepsin A (372 aa).

A propeptide spans 1 to 42 (MSVVKIPLVKKKSLRQNLIENGKLKEFMRTHKYNLGSKYIRE) (activation peptide). The region spanning 60-369 (YFGTIGIGTP…DRGNNQIGLA (310 aa)) is the Peptidase A1 domain. Asp-78 is an active-site residue. A disulfide bridge links Cys-91 with Cys-96. Ser-114 is subject to Phosphoserine. The cysteines at positions 252 and 256 are disulfide-linked. The active site involves Asp-261. The cysteines at positions 295 and 328 are disulfide-linked.

It belongs to the peptidase A1 family.

The protein resides in the secreted. It carries out the reaction Preferential cleavage: hydrophobic, preferably aromatic, residues in P1 and P1' positions. Cleaves 1-Phe-|-Val-2, 4-Gln-|-His-5, 13-Glu-|-Ala-14, 14-Ala-|-Leu-15, 15-Leu-|-Tyr-16, 16-Tyr-|-Leu-17, 23-Gly-|-Phe-24, 24-Phe-|-Phe-25 and 25-Phe-|-Tyr-26 bonds in the B chain of insulin.. Its function is as follows. Shows particularly broad specificity; although bonds involving phenylalanine and leucine are preferred, many others are also cleaved to some extent. This chain is Pepsin A (PGA), found in Bos taurus (Bovine).